The sequence spans 226 residues: Endonuclease V (226 aa).

Positions 43 and 111 each coordinate Mg(2+).

The protein belongs to the endonuclease V family. The cofactor is Mg(2+).

It is found in the cytoplasm. It catalyses the reaction Endonucleolytic cleavage at apurinic or apyrimidinic sites to products with a 5'-phosphate.. Its function is as follows. DNA repair enzyme involved in the repair of deaminated bases. Selectively cleaves double-stranded DNA at the second phosphodiester bond 3' to a deoxyinosine leaving behind the intact lesion on the nicked DNA. The sequence is that of Endonuclease V from Nocardia farcinica (strain IFM 10152).